The following is a 221-amino-acid chain: Orotidine 5'-phosphate decarboxylase (221 aa).

Residues D12, K34, 60–69 (DFKVADIPNT), S117, 170–180 (PGVGAQGGKAS), G193, and R194 each bind substrate. K62 (proton donor) is an active-site residue.

It belongs to the OMP decarboxylase family. Type 1 subfamily. As to quaternary structure, homodimer.

It catalyses the reaction orotidine 5'-phosphate + H(+) = UMP + CO2. Its pathway is pyrimidine metabolism; UMP biosynthesis via de novo pathway; UMP from orotate: step 2/2. In terms of biological role, catalyzes the decarboxylation of orotidine 5'-monophosphate (OMP) to uridine 5'-monophosphate (UMP). This Methanosarcina barkeri (strain Fusaro / DSM 804) protein is Orotidine 5'-phosphate decarboxylase.